The sequence spans 484 residues: Adenylosuccinate lyase (484 aa).

Ala-2 is modified (N-acetylalanine). Residues 20 to 21 (RY), 85 to 87 (RHD), and 111 to 112 (TS) contribute to the substrate site. Position 147 is an N6-acetyllysine (Lys-147). The active-site Proton donor/acceptor is the His-159. Substrate is bound at residue Gln-241. Catalysis depends on Ser-289, which acts as the Proton donor/acceptor. Lys-295 is subject to N6-acetyllysine. Arg-303, Arg-329, Ser-334, and Arg-338 together coordinate substrate. Lys-415 participates in a covalent cross-link: Glycyl lysine isopeptide (Lys-Gly) (interchain with G-Cter in SUMO1).

It belongs to the lyase 1 family. Adenylosuccinate lyase subfamily. In terms of assembly, homotetramer. Residues from neighboring subunits contribute catalytic and substrate-binding residues to each active site.

The catalysed reaction is N(6)-(1,2-dicarboxyethyl)-AMP = fumarate + AMP. The enzyme catalyses (2S)-2-[5-amino-1-(5-phospho-beta-D-ribosyl)imidazole-4-carboxamido]succinate = 5-amino-1-(5-phospho-beta-D-ribosyl)imidazole-4-carboxamide + fumarate. It functions in the pathway purine metabolism; AMP biosynthesis via de novo pathway; AMP from IMP: step 2/2. It participates in purine metabolism; IMP biosynthesis via de novo pathway; 5-amino-1-(5-phospho-D-ribosyl)imidazole-4-carboxamide from 5-amino-1-(5-phospho-D-ribosyl)imidazole-4-carboxylate: step 2/2. Its function is as follows. Catalyzes two non-sequential steps in de novo AMP synthesis: converts (S)-2-(5-amino-1-(5-phospho-D-ribosyl)imidazole-4-carboxamido)succinate (SAICAR) to fumarate plus 5-amino-1-(5-phospho-D-ribosyl)imidazole-4-carboxamide, and thereby also contributes to de novo IMP synthesis, and converts succinyladenosine monophosphate (SAMP) to AMP and fumarate. The polypeptide is Adenylosuccinate lyase (Adsl) (Mus musculus (Mouse)).